The following is a 148-amino-acid chain: Endothelial differentiation-related factor 1 homolog (148 aa).

The tract at residues Met1 to Gln26 is disordered. The region spanning Ile81–Lys135 is the HTH cro/C1-type domain. The segment at residues Gln92–Ser111 is a DNA-binding region (H-T-H motif).

Its subcellular location is the nucleus. Functionally, probable transcriptional coactivator. The sequence is that of Endothelial differentiation-related factor 1 homolog (EDF1) from Gallus gallus (Chicken).